Here is a 3996-residue protein sequence, read N- to C-terminus: Probable E3 ubiquitin-protein ligase HECTD4 (3996 aa).

Residues 282 to 302 (TCIIRCILVVFQVVFKFFFSP) traverse the membrane as a helical segment. A compositionally biased stretch (polar residues) spans 1494 to 1510 (PTASEPDTTLTKTSPKN). 2 disordered regions span residues 1494–1524 (PTASEPDTTLTKTSPKNSLKGDKDPGEESEA) and 1616–1637 (PETVSGLSTGDKKKTAQTSICR). T2080 is modified (phosphothreonine). 4 disordered regions span residues 2219–2245 (FITSGPDPHPPPIADDESDDDDDDDIP), 2859–2919 (TSAT…PTVL), 3017–3053 (EDTKKPKDKAEGGDGKVEPEKTLAFPGTDSMEVSTSS), and 3327–3403 (FDKS…QEVP). Residues 2232–2245 (ADDESDDDDDDDIP) are compositionally biased toward acidic residues. Positions 2866 to 2887 (LSDSSSSSSSSPGQTPQSPSLL) are enriched in low complexity. Basic residues predominate over residues 2888 to 2897 (SKRKKVKMKR). 3 stretches are compositionally biased toward basic and acidic residues: residues 3017 to 3037 (EDTKKPKDKAEGGDGKVEPEK), 3327 to 3341 (FDKSKYSKAGKEQHP), and 3370 to 3403 (LSEKKPTVKPKSPEKSKPDEKDPEKSPTKKQEVP). The HECT domain maps to 3627–3996 (SGGDPTYAFN…IHYREDPLSG (370 aa)). The active-site Glycyl thioester intermediate is the C3964.

It is found in the membrane. It carries out the reaction S-ubiquitinyl-[E2 ubiquitin-conjugating enzyme]-L-cysteine + [acceptor protein]-L-lysine = [E2 ubiquitin-conjugating enzyme]-L-cysteine + N(6)-ubiquitinyl-[acceptor protein]-L-lysine.. It functions in the pathway protein modification; protein ubiquitination. E3 ubiquitin-protein ligase which accepts ubiquitin from an E2 ubiquitin-conjugating enzyme in the form of a thioester and then directly transfers the ubiquitin to targeted substrates. This Homo sapiens (Human) protein is Probable E3 ubiquitin-protein ligase HECTD4 (HECTD4).